Reading from the N-terminus, the 190-residue chain is MGQVAFDALQASEELESAGISREKARAISLVVRKSHDVANVATKADIAEVKRDIADVRKDLSAEIADVRKDLSAEIADVRKDLSAEIADVRKDLSAEIADVRKDLSAEIADVRKDMAIRFEKTDAQIADVRKDMVNLFDKTDAQISLVRKDLQLEMSGIRAEQKLIRWMLGAGILGILSLVVKAFLMPAL.

This chain is Putative protein p47 (47), found in Escherichia coli (Bacteriophage APSE-1).